The following is a 399-amino-acid chain: Ornithine aminotransferase (399 aa).

Lysine 255 is subject to N6-(pyridoxal phosphate)lysine.

It belongs to the class-III pyridoxal-phosphate-dependent aminotransferase family. OAT subfamily. The cofactor is pyridoxal 5'-phosphate.

The protein localises to the cytoplasm. It catalyses the reaction a 2-oxocarboxylate + L-ornithine = L-glutamate 5-semialdehyde + an L-alpha-amino acid. The protein operates within amino-acid biosynthesis; L-proline biosynthesis; L-glutamate 5-semialdehyde from L-ornithine: step 1/1. Catalyzes the interconversion of ornithine to glutamate semialdehyde. In Brevibacillus brevis (strain 47 / JCM 6285 / NBRC 100599), this protein is Ornithine aminotransferase.